The primary structure comprises 112 residues: MATPMIAGAAVAAAAVAGRYGILAWQAFKARPRVPRMRRFYEGGFQSSMTRREAALILGVRESVVADKVKEAHRRVMVANHPDAGGSHYLASKINEAKDMMLGKSNNSGSAF.

N-acetylalanine is present on Ala-2. Residues 6–28 (IAGAAVAAAAVAGRYGILAWQAF) traverse the membrane as a helical segment. One can recognise a J domain in the interval 53–112 (EAALILGVRESVVADKVKEAHRRVMVANHPDAGGSHYLASKINEAKDMMLGKSNNSGSAF).

It belongs to the TIM14 family. Probable component of the PAM complex at least composed of a mitochondrial HSP70 protein, TIMM44 and TIMM14. The complex interacts with the TIMM23 component of the TIM17:23 complex.

Its subcellular location is the mitochondrion. The protein resides in the mitochondrion inner membrane. Functionally, component of the PAM complex, a complex required for the translocation of transit peptide-containing proteins from the inner membrane into the mitochondrial matrix in an ATP-dependent manner. This chain is Mitochondrial import inner membrane translocase subunit TIM14-3 (TIM14-3), found in Arabidopsis thaliana (Mouse-ear cress).